Reading from the N-terminus, the 300-residue chain is Glycine--tRNA ligase alpha subunit (300 aa).

This sequence belongs to the class-II aminoacyl-tRNA synthetase family. Tetramer of two alpha and two beta subunits.

The protein resides in the cytoplasm. It carries out the reaction tRNA(Gly) + glycine + ATP = glycyl-tRNA(Gly) + AMP + diphosphate. The chain is Glycine--tRNA ligase alpha subunit from Pseudoalteromonas translucida (strain TAC 125).